We begin with the raw amino-acid sequence, 411 residues long: Heparan-sulfate 6-O-sulfotransferase 1 (411 aa).

At 11–17 (MVERASK) the chain is on the cytoplasmic side. Residues 18–37 (FVLVVAGSVCFMLILYQYAG) traverse the membrane as a helical; Signal-anchor for type II membrane protein segment. Residues 38 to 411 (PGLSLGAPGG…DYMSHIIEKW (374 aa)) are Lumenal-facing. 93 to 101 (HIQKTGGTT) serves as a coordination point for 3'-phosphoadenylyl sulfate. Residues 123-124 (KK), arginine 140, tryptophan 145, and histidine 150 each bind substrate. The active-site Proton acceptor is histidine 150. Arginine 185 and serine 193 together coordinate 3'-phosphoadenylyl sulfate. The substrate site is built by histidine 197 and tryptophan 204. Asparagine 264 is a glycosylation site (N-linked (GlcNAc...) asparagine). 317 to 319 (MQY) is a binding site for 3'-phosphoadenylyl sulfate. An N-linked (GlcNAc...) asparagine glycan is attached at asparagine 320. 323 to 324 (RA) is a binding site for 3'-phosphoadenylyl sulfate. The stretch at 352-387 (KDLFQQRYQYKRQLERREQRLRSREERLLHRAKEAL) forms a coiled coil.

This sequence belongs to the sulfotransferase 6 family. Post-translationally, N-glycosylated. Expressed in fetal brain.

It is found in the membrane. It carries out the reaction alpha-D-glucosaminyl-[heparan sulfate](n) + 3'-phosphoadenylyl sulfate = 6-sulfo-alpha-D-glucosaminyl-[heparan sulfate](n) + adenosine 3',5'-bisphosphate + H(+). Its function is as follows. 6-O-sulfation enzyme which catalyzes the transfer of sulfate from 3'-phosphoadenosine 5'-phosphosulfate (PAPS) to position 6 of the N-sulfoglucosamine residue (GlcNS) of heparan sulfate. Critical for normal neuronal development where it may play a role in neuron branching. May also play a role in limb development. May prefer iduronic acid. The sequence is that of Heparan-sulfate 6-O-sulfotransferase 1 from Homo sapiens (Human).